The sequence spans 65 residues: Large ribosomal subunit protein bL35 (65 aa).

This sequence belongs to the bacterial ribosomal protein bL35 family.

The chain is Large ribosomal subunit protein bL35 from Caldicellulosiruptor bescii (strain ATCC BAA-1888 / DSM 6725 / KCTC 15123 / Z-1320) (Anaerocellum thermophilum).